Here is a 224-residue protein sequence, read N- to C-terminus: V-type proton ATPase subunit S1-like protein (224 aa).

A helical membrane pass occupies residues 147-167 (PAFLIGLAMSLILLLVLAYAL).

Belongs to the vacuolar ATPase subunit S1 family.

Its subcellular location is the membrane. This chain is V-type proton ATPase subunit S1-like protein (ATP6AP1L), found in Homo sapiens (Human).